Consider the following 229-residue polypeptide: 7-cyano-7-deazaguanine synthase (229 aa).

Residue 7 to 17 (LSGGLDSTTVL) coordinates ATP. Residues cysteine 191, cysteine 204, cysteine 207, and cysteine 210 each coordinate Zn(2+).

The protein belongs to the QueC family. Zn(2+) is required as a cofactor.

The catalysed reaction is 7-carboxy-7-deazaguanine + NH4(+) + ATP = 7-cyano-7-deazaguanine + ADP + phosphate + H2O + H(+). It functions in the pathway purine metabolism; 7-cyano-7-deazaguanine biosynthesis. Functionally, catalyzes the ATP-dependent conversion of 7-carboxy-7-deazaguanine (CDG) to 7-cyano-7-deazaguanine (preQ(0)). The protein is 7-cyano-7-deazaguanine synthase of Cyanothece sp. (strain PCC 7425 / ATCC 29141).